The chain runs to 316 residues: Aspartate carbamoyltransferase catalytic subunit (316 aa).

Residues Arg-66 and Thr-67 each coordinate carbamoyl phosphate. Lys-94 contacts L-aspartate. Carbamoyl phosphate contacts are provided by Arg-116, His-146, and Gln-149. L-aspartate-binding residues include Arg-180 and Arg-235. Residues Gly-276 and Pro-277 each contribute to the carbamoyl phosphate site.

It belongs to the aspartate/ornithine carbamoyltransferase superfamily. ATCase family. Heterododecamer (2C3:3R2) of six catalytic PyrB chains organized as two trimers (C3), and six regulatory PyrI chains organized as three dimers (R2).

It catalyses the reaction carbamoyl phosphate + L-aspartate = N-carbamoyl-L-aspartate + phosphate + H(+). The protein operates within pyrimidine metabolism; UMP biosynthesis via de novo pathway; (S)-dihydroorotate from bicarbonate: step 2/3. Its function is as follows. Catalyzes the condensation of carbamoyl phosphate and aspartate to form carbamoyl aspartate and inorganic phosphate, the committed step in the de novo pyrimidine nucleotide biosynthesis pathway. This Stenotrophomonas maltophilia (strain R551-3) protein is Aspartate carbamoyltransferase catalytic subunit.